A 589-amino-acid chain; its full sequence is Protein PAF1 homolog (589 aa).

Residues 1-54 (MASYRPPYPPLPQPPSQNSLAPPPPPPSLPPPVPPPPPSHQPYSYPPPPPPPPH) are compositionally biased toward pro residues. Disordered stretches follow at residues 1-180 (MASY…PLLT) and 542-589 (GVYS…DYSE). Residues 55-65 (AYYQQGPHYPQ) show a composition bias toward low complexity. Positions 71–87 (APPPPPPPSAPPPLVPD) are enriched in pro residues. The span at 88 to 116 (PPRHQGPNDHEKGASKQVGRRERAKPDPS) shows a compositional bias: basic and acidic residues. The segment covering 117–127 (KHHHRSHLPHS) has biased composition (basic residues). The stretch at 126–159 (HSKKIETEEERRLRKKRELEKQRQDEKHRQQMKN) forms a coiled coil. Basic and acidic residues predominate over residues 128 to 154 (KKIETEEERRLRKKRELEKQRQDEKHR).

Belongs to the PAF1 family. In terms of assembly, component of the nuclear PAF1 complex (PAF1C), which consists of VIP2/ELF7/PAF1, VIP3/SKI8/WDR61, VIP4/LEO1, VIP5/RTF1, VIP6/ELF8/CTR9 and CDC73. Expressed in roots, leaves and shoot apex.

It localises to the nucleus. Its function is as follows. Component of the PAF1 complex (PAF1C) which is involved in histone modifications such as methylation on histone H3 'Lys-4' (H3K4me3). Involved in regulation of flowering time. Required for the expression of the flowering repressors and MAD-box genes FLC, AGL27/FLM and AGL31/MAF2. Required for histone H3 trimethylation on 'Lys-4' H3K4me3 at the FLC and AGL27/FLM loci. Involved in the control of seed dormancy and germination. The chain is Protein PAF1 homolog from Arabidopsis thaliana (Mouse-ear cress).